A 788-amino-acid chain; its full sequence is Protein translocase subunit SecA 2 (788 aa).

ATP is bound by residues Gln-86, 104-108, and Asp-493; that span reads GEGKT.

The protein belongs to the SecA family. Monomer and homodimer. Part of the essential Sec protein translocation apparatus which comprises SecA, SecYEG and auxiliary proteins SecDF. Other proteins may also be involved.

The protein localises to the cell membrane. The protein resides in the cytoplasm. The catalysed reaction is ATP + H2O + cellular proteinSide 1 = ADP + phosphate + cellular proteinSide 2.. Functionally, part of the Sec protein translocase complex. Interacts with the SecYEG preprotein conducting channel. Has a central role in coupling the hydrolysis of ATP to the transfer of proteins into and across the cell membrane, serving as an ATP-driven molecular motor driving the stepwise translocation of polypeptide chains across the membrane. The protein is Protein translocase subunit SecA 2 of Bacillus anthracis.